A 504-amino-acid polypeptide reads, in one-letter code: UDP-N-acetylmuramoylalanine--D-glutamate ligase (504 aa).

129 to 135 (GTNGKTT) is an ATP binding site.

This sequence belongs to the MurCDEF family.

It is found in the cytoplasm. It carries out the reaction UDP-N-acetyl-alpha-D-muramoyl-L-alanine + D-glutamate + ATP = UDP-N-acetyl-alpha-D-muramoyl-L-alanyl-D-glutamate + ADP + phosphate + H(+). Its pathway is cell wall biogenesis; peptidoglycan biosynthesis. Functionally, cell wall formation. Catalyzes the addition of glutamate to the nucleotide precursor UDP-N-acetylmuramoyl-L-alanine (UMA). The polypeptide is UDP-N-acetylmuramoylalanine--D-glutamate ligase (Burkholderia pseudomallei (strain 668)).